We begin with the raw amino-acid sequence, 63 residues long: Large ribosomal subunit protein uL29 (63 aa).

The protein belongs to the universal ribosomal protein uL29 family.

The chain is Large ribosomal subunit protein uL29 from Shigella dysenteriae serotype 1 (strain Sd197).